The following is a 543-amino-acid chain: MPPPLQAQRLLLSHRRLPSPHLRCFTAVSSLPSAPAKTVAAAAAHAPSSILSIRESLLSGERTAAEITAEYLSRLRRTEPSVRSFIHVADAAAEREAEELDRRIATEGLDAVGPLAGVLVGVKDNLCTANMPSTGGSRILDGYQPAYDATAVRRLREAGAIVVGKTNLDEFGMGSTTEGSGFQVTTNPWDDSRVPGGSSGGSASAVSARQCVVSLGSDTGGSVRQPASFCGVVGLKPTYGRVSRFGLMAYASSLDVVGCFGSSVVDTATILSVIAGHDKMDSTSSSHDVSDYKSELVPLDLLESKPLNGMRIGIIQETLGEGVETGVISSIKDAASHLEQLGSVVEEVSLPSFSLGLPAYYILASSEASSNLSRYDGIRYGRQVSGDDLNELYGGSRANGLGHEVKMRILMGTYALSAGYYDAYYKRAQQVRTLVKKSFKEALERYDILVSPAAPSAAYKIGEKINDPLAMYAGDTMTVNVNLAGLPALVVPCGFVEGGSAGLPVGLQMIGSPFSEGNLLRIGHIFEQTLQNYSFVPPLLAES.

Active-site charge relay system residues include lysine 123 and serine 198. Serine 222 (acyl-ester intermediate) is an active-site residue.

Belongs to the amidase family. GatA subfamily. As to quaternary structure, subunit of the heterotrimeric GatCAB amidotransferase (AdT) complex, composed of A, B and C subunits.

The protein resides in the mitochondrion. It localises to the plastid. It is found in the chloroplast stroma. It catalyses the reaction L-glutamyl-tRNA(Gln) + L-glutamine + ATP + H2O = L-glutaminyl-tRNA(Gln) + L-glutamate + ADP + phosphate + H(+). In terms of biological role, allows the formation of correctly charged Gln-tRNA(Gln) through the transamidation of misacylated Glu-tRNA(Gln) in chloroplasts and mitochondria. The reaction takes place in the presence of glutamine and ATP through an activated gamma-phospho-Glu-tRNA(Gln). The sequence is that of Glutamyl-tRNA(Gln) amidotransferase subunit A, chloroplastic/mitochondrial from Oryza sativa subsp. japonica (Rice).